The chain runs to 128 residues: Histone H2A type 1-J (128 aa).

The interval 1 to 22 (MSGRGKQGGKARAKAKTRSSRA) is disordered. Ser2 carries the N-acetylserine modification. A Phosphoserine; by RPS6KA5 modification is found at Ser2. A Citrulline; alternate modification is found at Arg4. Arg4 is subject to Symmetric dimethylarginine; by PRMT5; alternate. Position 6 is an N6-(2-hydroxyisobutyryl)lysine (Lys6). A compositionally biased stretch (basic residues) spans 7–19 (QGGKARAKAKTRS). The residue at position 10 (Lys10) is an N6-(2-hydroxyisobutyryl)lysine; alternate. Residues Lys10 and Lys14 each carry the N6-(beta-hydroxybutyryl)lysine; alternate modification. Lys10 is modified (N6-lactoyllysine; alternate). Lys10 carries the post-translational modification N6-succinyllysine; alternate. A Glycyl lysine isopeptide (Lys-Gly) (interchain with G-Cter in ubiquitin); alternate cross-link involves residue Lys14. Lys16 participates in a covalent cross-link: Glycyl lysine isopeptide (Lys-Gly) (interchain with G-Cter in ubiquitin). N6-(2-hydroxyisobutyryl)lysine; alternate is present on Lys37. Position 37 is an N6-(beta-hydroxybutyryl)lysine; alternate (Lys37). Lys37 carries the post-translational modification N6-crotonyllysine; alternate. Lys75 and Lys76 each carry N6-(2-hydroxyisobutyryl)lysine. At Lys96 the chain carries N6-(2-hydroxyisobutyryl)lysine; alternate. Residue Lys96 is modified to N6-(beta-hydroxybutyryl)lysine; alternate. An N6-succinyllysine; alternate modification is found at Lys96. At Lys96 the chain carries N6-glutaryllysine; alternate. Lys100 carries the post-translational modification N6-glutaryllysine. At Gln105 the chain carries N5-methylglutamine. The residue at position 119 (Lys119) is an N6-(2-hydroxyisobutyryl)lysine; alternate. Lys119 carries the post-translational modification N6-(beta-hydroxybutyryl)lysine; alternate. Residues Lys119 and Lys120 each carry the N6-crotonyllysine; alternate modification. Residues Lys119 and Lys120 each carry the N6-glutaryllysine; alternate modification. A Glycyl lysine isopeptide (Lys-Gly) (interchain with G-Cter in ubiquitin); alternate cross-link involves residue Lys120. A Phosphothreonine; by DCAF1 modification is found at Thr121. An N6-crotonyllysine; alternate modification is found at Lys126. Lys126 carries the N6-glutaryllysine; alternate modification.

Belongs to the histone H2A family. As to quaternary structure, the nucleosome is a histone octamer containing two molecules each of H2A, H2B, H3 and H4 assembled in one H3-H4 heterotetramer and two H2A-H2B heterodimers. The octamer wraps approximately 147 bp of DNA. Post-translationally, deiminated on Arg-4 in granulocytes upon calcium entry. Monoubiquitination of Lys-120 (H2AK119Ub) by RING1, TRIM37 and RNF2/RING2 complex gives a specific tag for epigenetic transcriptional repression and participates in X chromosome inactivation of female mammals. It is involved in the initiation of both imprinted and random X inactivation. Ubiquitinated H2A is enriched in inactive X chromosome chromatin. Ubiquitination of H2A functions downstream of methylation of 'Lys-27' of histone H3 (H3K27me). H2AK119Ub by RNF2/RING2 can also be induced by ultraviolet and may be involved in DNA repair. Monoubiquitination of Lys-120 (H2AK119Ub) by TRIM37 may promote transformation of cells in a number of breast cancers. Following DNA double-strand breaks (DSBs), it is ubiquitinated through 'Lys-63' linkage of ubiquitin moieties by the E2 ligase UBE2N and the E3 ligases RNF8 and RNF168, leading to the recruitment of repair proteins to sites of DNA damage. Ubiquitination at Lys-14 and Lys-16 (H2AK13Ub and H2AK15Ub, respectively) in response to DNA damage is initiated by RNF168 that mediates monoubiquitination at these 2 sites, and 'Lys-63'-linked ubiquitin are then conjugated to monoubiquitin; RNF8 is able to extend 'Lys-63'-linked ubiquitin chains in vitro. Deubiquitinated by USP51 at Lys-14 and Lys-16 (H2AK13Ub and H2AK15Ub, respectively) after damaged DNA is repaired. H2AK119Ub and ionizing radiation-induced 'Lys-63'-linked ubiquitination (H2AK13Ub and H2AK15Ub) are distinct events. In terms of processing, phosphorylation on Ser-2 (H2AS1ph) is enhanced during mitosis. Phosphorylation on Ser-2 by RPS6KA5/MSK1 directly represses transcription. Acetylation of H3 inhibits Ser-2 phosphorylation by RPS6KA5/MSK1. Phosphorylation at Thr-121 (H2AT120ph) by DCAF1 is present in the regulatory region of many tumor suppresor genes and down-regulates their transcription. Post-translationally, glutamine methylation at Gln-105 (H2AQ104me) by FBL is specifically dedicated to polymerase I. It is present at 35S ribosomal DNA locus and impairs binding of the FACT complex. Symmetric dimethylation on Arg-4 by the PRDM1/PRMT5 complex may play a crucial role in the germ-cell lineage. In terms of processing, crotonylation (Kcr) is specifically present in male germ cells and marks testis-specific genes in post-meiotic cells, including X-linked genes that escape sex chromosome inactivation in haploid cells. Crotonylation marks active promoters and enhancers and confers resistance to transcriptional repressors. It is also associated with post-meiotically activated genes on autosomes. Post-translationally, lactylated in macrophages by EP300/P300 by using lactoyl-CoA directly derived from endogenous or exogenous lactate, leading to stimulates gene transcription.

It is found in the nucleus. It localises to the chromosome. Core component of nucleosome. Nucleosomes wrap and compact DNA into chromatin, limiting DNA accessibility to the cellular machineries which require DNA as a template. Histones thereby play a central role in transcription regulation, DNA repair, DNA replication and chromosomal stability. DNA accessibility is regulated via a complex set of post-translational modifications of histones, also called histone code, and nucleosome remodeling. This chain is Histone H2A type 1-J, found in Homo sapiens (Human).